Reading from the N-terminus, the 521-residue chain is Importin subunit alpha-4 (521 aa).

Residues Met1–Arg29 are disordered. Ala2 carries the N-acetylalanine modification. In terms of domain architecture, IBB spans Ala2–Glu58. The segment covering Lys18 to Arg29 has biased composition (basic and acidic residues). The short motif at Glu43–Pro52 is the Nuclear localization signal element. Residues Ser56 and Ser60 each carry the phosphoserine modification. An ARM 1; truncated repeat occupies Phe66 to Pro106. 8 ARM repeats span residues Ile107–Gln149, Thr150–Tyr194, Val195–Pro233, Pro234–Gln278, Met279–Gln318, Thr319–Gln360, Val361–Arg400, and Lys401–Gly443. Residues Trp137–Arg229 are NLS binding site (major). The tract at residues Arg306–Asn394 is NLS binding site (minor). The ARM 10; atypical repeat unit spans residues Ser447–Phe485. Tyr484 is subject to Phosphotyrosine.

This sequence belongs to the importin alpha family. In terms of assembly, forms a complex with importin subunit beta-1. Interacts with DDX21. Interacts with NCBP1, NCBP2/CBP20 and NCBP3. Interacts with RCC1. Interacts with ZC3H11A. Detected more or less in all tissues examined (Ehrlich ascites tumor cells, testis, kidney, spleen, liver, heart, lung, thymus, skeletal muscle, cerebellum and brain (without cerebellum)).

It is found in the cytoplasm. It localises to the nucleus. Functions in nuclear protein import as an adapter protein for nuclear receptor KPNB1. Binds specifically and directly to substrates containing either a simple or bipartite NLS motif. Docking of the importin/substrate complex to the nuclear pore complex (NPC) is mediated by KPNB1 through binding to nucleoporin FxFG repeats and the complex is subsequently translocated through the pore by an energy requiring, Ran-dependent mechanism. At the nucleoplasmic side of the NPC, Ran binds to importin-beta and the three components separate and importin-alpha and -beta are re-exported from the nucleus to the cytoplasm where GTP hydrolysis releases Ran from importin. The directionality of nuclear import is thought to be conferred by an asymmetric distribution of the GTP- and GDP-bound forms of Ran between the cytoplasm and nucleus. In vitro, mediates the nuclear import of human cytomegalovirus UL84 by recognizing a non-classical NLS. In Mus musculus (Mouse), this protein is Importin subunit alpha-4 (Kpna3).